The sequence spans 340 residues: Ketol-acid reductoisomerase (NADP(+)) (340 aa).

The 180-residue stretch at 3–182 (VTMYYEEDVE…GCARVGIIET (180 aa)) folds into the KARI N-terminal Rossmann domain. NADP(+) is bound by residues 26–29 (YGSQ), Arg49, Ser53, and 83–86 (DELQ). The active site involves His108. Position 134 (Gly134) interacts with NADP(+). The KARI C-terminal knotted domain maps to 183 to 328 (TFKEETEEDL…AELRKAMPFT (146 aa)). Mg(2+) is bound by residues Asp191, Glu195, Glu227, and Glu231. Substrate is bound at residue Ser252.

It belongs to the ketol-acid reductoisomerase family. It depends on Mg(2+) as a cofactor.

It catalyses the reaction (2R)-2,3-dihydroxy-3-methylbutanoate + NADP(+) = (2S)-2-acetolactate + NADPH + H(+). The enzyme catalyses (2R,3R)-2,3-dihydroxy-3-methylpentanoate + NADP(+) = (S)-2-ethyl-2-hydroxy-3-oxobutanoate + NADPH + H(+). It functions in the pathway amino-acid biosynthesis; L-isoleucine biosynthesis; L-isoleucine from 2-oxobutanoate: step 2/4. Its pathway is amino-acid biosynthesis; L-valine biosynthesis; L-valine from pyruvate: step 2/4. Functionally, involved in the biosynthesis of branched-chain amino acids (BCAA). Catalyzes an alkyl-migration followed by a ketol-acid reduction of (S)-2-acetolactate (S2AL) to yield (R)-2,3-dihydroxy-isovalerate. In the isomerase reaction, S2AL is rearranged via a Mg-dependent methyl migration to produce 3-hydroxy-3-methyl-2-ketobutyrate (HMKB). In the reductase reaction, this 2-ketoacid undergoes a metal-dependent reduction by NADPH to yield (R)-2,3-dihydroxy-isovalerate. This Lactococcus lactis subsp. cremoris (strain MG1363) protein is Ketol-acid reductoisomerase (NADP(+)).